We begin with the raw amino-acid sequence, 475 residues long: Sulfate adenylyltransferase subunit 1 (475 aa).

Positions Lys-25 to Arg-239 constitute a tr-type G domain. The G1 stretch occupies residues Gly-34–Ser-41. Residue Gly-34–Ser-41 coordinates GTP. Residues Gly-92–Asp-96 form a G2 region. The G3 stretch occupies residues Asp-113–Gly-116. Residues Asp-113–His-117 and Asn-168–Asp-171 contribute to the GTP site. Residues Asn-168 to Asp-171 are G4. The interval Ser-206–Leu-208 is G5.

The protein belongs to the TRAFAC class translation factor GTPase superfamily. Classic translation factor GTPase family. CysN/NodQ subfamily. In terms of assembly, heterodimer composed of CysD, the smaller subunit, and CysN.

The catalysed reaction is sulfate + ATP + H(+) = adenosine 5'-phosphosulfate + diphosphate. It participates in sulfur metabolism; hydrogen sulfide biosynthesis; sulfite from sulfate: step 1/3. Functionally, with CysD forms the ATP sulfurylase (ATPS) that catalyzes the adenylation of sulfate producing adenosine 5'-phosphosulfate (APS) and diphosphate, the first enzymatic step in sulfur assimilation pathway. APS synthesis involves the formation of a high-energy phosphoric-sulfuric acid anhydride bond driven by GTP hydrolysis by CysN coupled to ATP hydrolysis by CysD. This Shigella dysenteriae serotype 1 (strain Sd197) protein is Sulfate adenylyltransferase subunit 1.